The following is a 264-amino-acid chain: Taurine import ATP-binding protein TauB (264 aa).

Residues 4–233 (LQLERISAQY…RYAAGESARA (230 aa)) form the ABC transporter domain. 38 to 45 (GPSGSGKT) contributes to the ATP binding site.

It belongs to the ABC transporter superfamily. Taurine importer (TC 3.A.1.17.1) family. In terms of assembly, the complex is composed of two ATP-binding proteins (TauB), two transmembrane proteins (TauC) and a solute-binding protein (TauA).

It is found in the cell inner membrane. It carries out the reaction taurine(out) + ATP + H2O = taurine(in) + ADP + phosphate + H(+). In terms of biological role, part of the ABC transporter complex TauABC involved in taurine import. Responsible for energy coupling to the transport system. The polypeptide is Taurine import ATP-binding protein TauB (Pseudomonas fluorescens (strain ATCC BAA-477 / NRRL B-23932 / Pf-5)).